Reading from the N-terminus, the 43-residue chain is CTTGPCCRQCKLKPAGTTCWRTSVSSHYCTGRSCECPSYPGNG.

4 disulfide bridges follow: C1/C10, C6/C29, C7/C34, and C19/C36. The Disintegrin domain maps to 1–43; it reads CTTGPCCRQCKLKPAGTTCWRTSVSSHYCTGRSCECPSYPGNG. Residues 21–23 carry the Cell attachment site; atypical (RTS) motif; it reads RTS.

The protein belongs to the disintegrin family. Short disintegrin subfamily. In terms of assembly, monomer. In terms of tissue distribution, expressed by the venom gland.

It localises to the secreted. Functionally, specifically interacts with the alpha-1/beta-1 integrin (ITGA1/ITGB1). Exhibits highly inhibitory effects on cell adhesion and cell migration to collagens I and IV. Also shows in vivo anti-angiogenic activity. The sequence is that of Disintegrin CV from Cerastes vipera (Sahara sand viper).